Consider the following 234-residue polypeptide: Large ribosomal subunit protein uL1 (234 aa).

Belongs to the universal ribosomal protein uL1 family. In terms of assembly, part of the 50S ribosomal subunit.

Binds directly to 23S rRNA. The L1 stalk is quite mobile in the ribosome, and is involved in E site tRNA release. In terms of biological role, protein L1 is also a translational repressor protein, it controls the translation of the L11 operon by binding to its mRNA. The protein is Large ribosomal subunit protein uL1 of Anaeromyxobacter dehalogenans (strain 2CP-C).